A 56-amino-acid chain; its full sequence is RGICLEPKVVGPCKARIRRFYYDSETGKCTPFIYGGCGGNGNNFETLHACRGICRA.

Residues 4 to 54 enclose the BPTI/Kunitz inhibitor domain; it reads CLEPKVVGPCKARIRRFYYDSETGKCTPFIYGGCGGNGNNFETLHACRGIC. Disulfide bonds link Cys-4–Cys-54, Cys-13–Cys-37, and Cys-29–Cys-50.

This sequence belongs to the venom Kunitz-type family. Sea anemone type 2 potassium channel toxin subfamily. In terms of processing, contains three disulfide bonds.

Its subcellular location is the secreted. The protein resides in the nematocyst. Serine protease inhibitor that inhibits trypsin (Ki=50 nM) and probably also chymotrypsin (Kd=1.6 nM). Has an anti-inflammatory effect in LPS-activated macrophages in vitro, specifically reducing release of TNF and IL6 but not nitric oxide and reducing expression of IL1B precursor. This chain is PI-stichotoxin-Hmg3a, found in Heteractis magnifica (Magnificent sea anemone).